The following is a 237-amino-acid chain: 1-(5-phosphoribosyl)-5-[(5-phosphoribosylamino)methylideneamino] imidazole-4-carboxamide isomerase (237 aa).

Residue aspartate 8 is the Proton acceptor of the active site. The active-site Proton donor is aspartate 130.

It belongs to the HisA/HisF family.

The protein resides in the cytoplasm. It carries out the reaction 1-(5-phospho-beta-D-ribosyl)-5-[(5-phospho-beta-D-ribosylamino)methylideneamino]imidazole-4-carboxamide = 5-[(5-phospho-1-deoxy-D-ribulos-1-ylimino)methylamino]-1-(5-phospho-beta-D-ribosyl)imidazole-4-carboxamide. It functions in the pathway amino-acid biosynthesis; L-histidine biosynthesis; L-histidine from 5-phospho-alpha-D-ribose 1-diphosphate: step 4/9. This Caldicellulosiruptor bescii (strain ATCC BAA-1888 / DSM 6725 / KCTC 15123 / Z-1320) (Anaerocellum thermophilum) protein is 1-(5-phosphoribosyl)-5-[(5-phosphoribosylamino)methylideneamino] imidazole-4-carboxamide isomerase.